The primary structure comprises 204 residues: Protein XpaC (204 aa).

In double copy it causes aberrant cell morphology, filamentation and inhibits sporulation. Hydrolyzes 5-bromo-4-chloroindolyl phosphate. The polypeptide is Protein XpaC (xpaC) (Bacillus subtilis (strain 168)).